The primary structure comprises 442 residues: MRVGSAVSPKVLKGFRDLLPDEEIERALLVEKLTVALRQMGFVPIDTPALEYTEVLLRKSEGDTEKQMFRFVDKGGRDVALRFDLTVPLARFVATHYARLYFPFKRYHFAKVWRGEKPQMGRYREFTQCDFDIVGSDSVCADFEILKSIRHMLYMAGAEHIRIHVAHRGLFDRFLRALSLSDQAEHILRIIDKRAKMAPHVLTAQLESLCDPVRVQKIMTYVSAGEVDGVAPSFEHTLSAIETLTGGVSEESTRLRKIYELLCAVNIQSSYVFDPSITRGFDYYTGMVCETFLTQLPHIGSVCSGGRYDHLTALYMKDAVSGVGASIGLDRLYAAFQQLGMSREHVCFVQALIFCQDSALMDVYQKLCSYFAVQVATEVFPDPRKLSQQYAFAEKKGIRWGIFVEQRNAVVEDCLLVLRDLSTRKDTRLPAHEVRRRMAAEG.

Belongs to the class-II aminoacyl-tRNA synthetase family. Homodimer.

It localises to the cytoplasm. The enzyme catalyses tRNA(His) + L-histidine + ATP = L-histidyl-tRNA(His) + AMP + diphosphate + H(+). The polypeptide is Histidine--tRNA ligase (hisS) (Treponema pallidum (strain Nichols)).